The primary structure comprises 647 residues: DNA mismatch repair protein MutL (647 aa).

The interval 375-433 (KQEEPQAVKQPTQLWQPPKQEWQPPQSLVREEQSWQPSTKPIIEEPIQEEKSWDSNEEG) is disordered. Positions 387 to 400 (QLWQPPKQEWQPPQ) are enriched in low complexity.

Belongs to the DNA mismatch repair MutL/HexB family.

Its function is as follows. This protein is involved in the repair of mismatches in DNA. It is required for dam-dependent methyl-directed DNA mismatch repair. May act as a 'molecular matchmaker', a protein that promotes the formation of a stable complex between two or more DNA-binding proteins in an ATP-dependent manner without itself being part of a final effector complex. The chain is DNA mismatch repair protein MutL from Bacillus cereus (strain AH820).